The sequence spans 309 residues: Small ribosomal subunit biogenesis GTPase RsgA (309 aa).

The 162-residue stretch at 64–225 (ENELVRPPLA…VADTPGFSTY (162 aa)) folds into the CP-type G domain. GTP contacts are provided by residues 113–116 (SKTD) and 168–176 (GQTGAGKST). 4 residues coordinate Zn(2+): C249, C254, H256, and C262.

It belongs to the TRAFAC class YlqF/YawG GTPase family. RsgA subfamily. In terms of assembly, monomer. Associates with 30S ribosomal subunit, binds 16S rRNA. Zn(2+) is required as a cofactor.

The protein localises to the cytoplasm. In terms of biological role, one of several proteins that assist in the late maturation steps of the functional core of the 30S ribosomal subunit. Helps release RbfA from mature subunits. May play a role in the assembly of ribosomal proteins into the subunit. Circularly permuted GTPase that catalyzes slow GTP hydrolysis, GTPase activity is stimulated by the 30S ribosomal subunit. This is Small ribosomal subunit biogenesis GTPase RsgA from Pediococcus pentosaceus (strain ATCC 25745 / CCUG 21536 / LMG 10740 / 183-1w).